The chain runs to 174 residues: Nucleoside diphosphate kinase (174 aa).

ATP is bound by residues K14, F62, R90, T96, and R107. H123 serves as the catalytic Pros-phosphohistidine intermediate.

This sequence belongs to the NDK family. Requires Mg(2+) as cofactor.

The protein resides in the cytoplasm. It carries out the reaction a 2'-deoxyribonucleoside 5'-diphosphate + ATP = a 2'-deoxyribonucleoside 5'-triphosphate + ADP. The enzyme catalyses a ribonucleoside 5'-diphosphate + ATP = a ribonucleoside 5'-triphosphate + ADP. In terms of biological role, major role in the synthesis of nucleoside triphosphates other than ATP. The ATP gamma phosphate is transferred to the NDP beta phosphate via a ping-pong mechanism, using a phosphorylated active-site intermediate. In Thermococcus kodakarensis (strain ATCC BAA-918 / JCM 12380 / KOD1) (Pyrococcus kodakaraensis (strain KOD1)), this protein is Nucleoside diphosphate kinase.